Consider the following 334-residue polypeptide: Eukaryotic translation initiation factor 3 subunit H (334 aa).

The 135-residue stretch at 21 to 155 folds into the MPN domain; it reads VQIDGLVVLK…LKAYRLTPKL (135 aa). A disordered region spans residues 247–284; it reads RNVGKQQQQKHQYTQRKQQENLQRLSRGETPLPEEDVN. Over residues 251-262 the composition is skewed to low complexity; sequence KQQQQKHQYTQR.

This sequence belongs to the eIF-3 subunit H family. As to quaternary structure, component of the eukaryotic translation initiation factor 3 (eIF-3) complex, which is composed of 13 subunits: eif3a, eif3b, eif3c, eif3d, eif3e, eif3f, eif3g, eif3h, eif3i, eif3j, eif3k, eif3l and eif3m.

It localises to the cytoplasm. Its function is as follows. Component of the eukaryotic translation initiation factor 3 (eIF-3) complex, which is involved in protein synthesis of a specialized repertoire of mRNAs and, together with other initiation factors, stimulates binding of mRNA and methionyl-tRNAi to the 40S ribosome. The eIF-3 complex specifically targets and initiates translation of a subset of mRNAs involved in cell proliferation. In Xenopus laevis (African clawed frog), this protein is Eukaryotic translation initiation factor 3 subunit H (eif3h).